A 498-amino-acid chain; its full sequence is Protein flp (498 aa).

4 helical membrane passes run 6 to 26, 389 to 409, 433 to 453, and 471 to 491; these read LYFLSISIIILVAISIAIYIT, FNIVTVLMTTLILLAFIFSAY, LTLCLCIAIALILYALPYLIL, and LALITTLIALFSTLIVILLFL.

It localises to the cell membrane. In terms of biological role, its precise function is unknown. Has no penicillin-binding activity and is not involved in methicillin resistance. The sequence is that of Protein flp (flp) from Staphylococcus aureus (strain Mu50 / ATCC 700699).